The following is a 143-amino-acid chain: Large ribosomal subunit protein uL16 (143 aa).

Residues 1-17 (MLQPKRTKFRKAHKGRI) show a composition bias toward basic residues. The interval 1-20 (MLQPKRTKFRKAHKGRIHGN) is disordered.

This sequence belongs to the universal ribosomal protein uL16 family. Part of the 50S ribosomal subunit.

Its function is as follows. Binds 23S rRNA and is also seen to make contacts with the A and possibly P site tRNAs. This is Large ribosomal subunit protein uL16 from Zymomonas mobilis subsp. mobilis (strain ATCC 31821 / ZM4 / CP4).